The chain runs to 497 residues: Acetyltransferase FGR3 (497 aa).

Ca(2+) contacts are provided by Asp-221 and Ile-224. 2 residues coordinate CoA: Lys-255 and Asp-303. Asp-386 serves as a coordination point for Ca(2+). Residue Thr-396 coordinates CoA. Asp-462 provides a ligand contact to Ca(2+). The disordered stretch occupies residues 477–497; it reads DASEAKKANGTNGTNGVNGSS. Residues 485 to 497 show a composition bias toward low complexity; that stretch reads NGTNGTNGVNGSS.

It belongs to the trichothecene 3-O-acetyltransferase family.

It functions in the pathway secondary metabolite biosynthesis. Functionally, acetyltransferase; part of the gene cluster that mediates the biosynthesis of the tetraketides fugralins such as linear fugralin A and cyclic fugralin B, volatile compounds that play a role in the asexual reproductive cycle but are not involved in pathogenicity. One of the key features of fugralins is the presence of a double methyl group, which is only rarely encountered in fungal secondary metabolites. As the fugralins cluster does not contain an independent methyltransferase, the PKS FGR1 is probably responsible for adding two methyl groups to the same carbon atom. Fugralin B is similar to fugralin A except for a cyclization between the carboxylic acid C-8 and the alcohol on C-4 resulting in a six membered lactone ring, probably catalyzed by the cyclase FGR4. The exact role of the individual cluster genes remains unknown and further work is needed to unravel the biosynthetic pathway. The protein is Acetyltransferase FGR3 of Gibberella zeae (strain ATCC MYA-4620 / CBS 123657 / FGSC 9075 / NRRL 31084 / PH-1) (Wheat head blight fungus).